Here is a 601-residue protein sequence, read N- to C-terminus: Arginine--tRNA ligase (601 aa).

Residues 133–143 (PNTNKPLHLGH) carry the 'HIGH' region motif.

Belongs to the class-I aminoacyl-tRNA synthetase family. In terms of assembly, monomer.

It localises to the cytoplasm. It catalyses the reaction tRNA(Arg) + L-arginine + ATP = L-arginyl-tRNA(Arg) + AMP + diphosphate. The polypeptide is Arginine--tRNA ligase (Flavobacterium psychrophilum (strain ATCC 49511 / DSM 21280 / CIP 103535 / JIP02/86)).